A 246-amino-acid polypeptide reads, in one-letter code: Alpha-tubulin N-acetyltransferase (246 aa).

Residues 21 to 202 form the N-acetyltransferase domain; the sequence is LTLVPDGVSR…NNFVVFHSFF (182 aa). Residues 135 to 148 and 172 to 181 contribute to the acetyl-CoA site; these read FYVDESCQRQGYGK and SNKLLGFLRK.

This sequence belongs to the acetyltransferase ATAT1 family.

It carries out the reaction L-lysyl-[alpha-tubulin] + acetyl-CoA = N(6)-acetyl-L-lysyl-[alpha-tubulin] + CoA + H(+). Functionally, specifically acetylates 'Lys-40' in alpha-tubulin on the lumenal side of microtubules. Promotes microtubule destabilization and accelerates microtubule dynamics; this activity may be independent of acetylation activity. Acetylates alpha-tubulin with a slow enzymatic rate, due to a catalytic site that is not optimized for acetyl transfer. Enters the microtubule through each end and diffuses quickly throughout the lumen of microtubules. Acetylates only long/old microtubules because of its slow acetylation rate since it does not have time to act on dynamically unstable microtubules before the enzyme is released. In Leishmania infantum, this protein is Alpha-tubulin N-acetyltransferase.